The chain runs to 669 residues: Cysteine-rich receptor-like protein kinase 10 (669 aa).

The N-terminal stretch at 1-34 (MRRNTDQESPIMSYYSSFFFLFLFSFLTSFRVSA) is a signal peptide. Topologically, residues 35 to 285 (QDPTYVYHTC…PRSGKDGNSK (251 aa)) are extracellular. Gnk2-homologous domains are found at residues 38–142 (TYVY…NQNI) and 148–252 (TTGG…IYAF). N-linked (GlcNAc...) asparagine glycosylation is found at Asn-49, Asn-53, Asn-71, and Asn-80. 2 cysteine pairs are disulfide-bonded: Cys-96-Cys-105 and Cys-108-Cys-133. N-linked (GlcNAc...) asparagine glycans are attached at residues Asn-114, Asn-159, Asn-185, and Asn-196. 2 cysteine pairs are disulfide-bonded: Cys-209-Cys-218 and Cys-221-Cys-243. Residues 260–274 (PPPPPPSISTPPVSA) show a composition bias toward pro residues. A disordered region spans residues 260 to 280 (PPPPPPSISTPPVSAPPRSGK). The chain crosses the membrane as a helical span at residues 286–306 (VLVIAIVVPIIVAVLLFIAGY). The Cytoplasmic portion of the chain corresponds to 307–669 (CFLTRRARKS…DASITDIHPR (363 aa)). A Protein kinase domain is found at 348–634 (FVESNKIGQG…TLPVPRQPGL (287 aa)). ATP-binding positions include 354 to 362 (IGQGGFGEV) and Lys-376. Tyr-421 bears the Phosphotyrosine mark. The active-site Proton acceptor is the Asp-473. Ser-477 carries the post-translational modification Phosphoserine. Thr-513 bears the Phosphothreonine mark. Residue Tyr-521 is modified to Phosphotyrosine.

This sequence belongs to the protein kinase superfamily. Ser/Thr protein kinase family. CRK subfamily. Interacts with CRKIP1 (KAPP), CRKIP2 and CRKIP3, three kinase-associated type 2C proteins.

Its subcellular location is the membrane. The catalysed reaction is L-seryl-[protein] + ATP = O-phospho-L-seryl-[protein] + ADP + H(+). It catalyses the reaction L-threonyl-[protein] + ATP = O-phospho-L-threonyl-[protein] + ADP + H(+). In Arabidopsis thaliana (Mouse-ear cress), this protein is Cysteine-rich receptor-like protein kinase 10 (CRK10).